The chain runs to 48 residues: Large ribosomal subunit protein eL40 (48 aa).

The protein belongs to the eukaryotic ribosomal protein eL40 family.

This chain is Large ribosomal subunit protein eL40, found in Methanospirillum hungatei JF-1 (strain ATCC 27890 / DSM 864 / NBRC 100397 / JF-1).